The primary structure comprises 365 residues: Chorismate synthase (365 aa).

Basic and acidic residues predominate over residues isoleucine 41–glycine 51. The tract at residues isoleucine 41 to alanine 62 is disordered. Arginine 48 is an NADP(+) binding site. FMN is bound by residues arginine 125–serine 127, glycine 285, lysine 300–serine 304, and arginine 327.

It belongs to the chorismate synthase family. Requires FMNH2 as cofactor.

It catalyses the reaction 5-O-(1-carboxyvinyl)-3-phosphoshikimate = chorismate + phosphate. Its pathway is metabolic intermediate biosynthesis; chorismate biosynthesis; chorismate from D-erythrose 4-phosphate and phosphoenolpyruvate: step 7/7. In terms of biological role, catalyzes the anti-1,4-elimination of the C-3 phosphate and the C-6 proR hydrogen from 5-enolpyruvylshikimate-3-phosphate (EPSP) to yield chorismate, which is the branch point compound that serves as the starting substrate for the three terminal pathways of aromatic amino acid biosynthesis. This reaction introduces a second double bond into the aromatic ring system. This Methanosarcina acetivorans (strain ATCC 35395 / DSM 2834 / JCM 12185 / C2A) protein is Chorismate synthase.